A 157-amino-acid polypeptide reads, in one-letter code: Nucleoside diphosphate kinase (157 aa).

Residues K12, F60, R88, T94, and R105 each contribute to the ATP site. H121 acts as the Pros-phosphohistidine intermediate in catalysis.

The protein belongs to the NDK family. Mg(2+) serves as cofactor.

It is found in the cytoplasm. It carries out the reaction a 2'-deoxyribonucleoside 5'-diphosphate + ATP = a 2'-deoxyribonucleoside 5'-triphosphate + ADP. It catalyses the reaction a ribonucleoside 5'-diphosphate + ATP = a ribonucleoside 5'-triphosphate + ADP. Major role in the synthesis of nucleoside triphosphates other than ATP. The ATP gamma phosphate is transferred to the NDP beta phosphate via a ping-pong mechanism, using a phosphorylated active-site intermediate. The protein is Nucleoside diphosphate kinase of Pyrococcus horikoshii (strain ATCC 700860 / DSM 12428 / JCM 9974 / NBRC 100139 / OT-3).